A 440-amino-acid chain; its full sequence is Xaa-Pro dipeptidase (440 aa).

The Mn(2+) site is built by Asp244, Asp255, His335, Glu380, and Glu419.

Belongs to the peptidase M24B family. Bacterial-type prolidase subfamily. Mn(2+) is required as a cofactor.

It carries out the reaction Xaa-L-Pro dipeptide + H2O = an L-alpha-amino acid + L-proline. In terms of biological role, splits dipeptides with a prolyl residue in the C-terminal position. The protein is Xaa-Pro dipeptidase of Shewanella baltica (strain OS185).